The primary structure comprises 278 residues: Large ribosomal subunit protein uL2 (278 aa).

2 disordered regions span residues 33 to 57 and 224 to 278; these read LIRP…KGGG and VVMN…GKKR. Residues 45-57 show a composition bias toward basic residues; sequence AHGRITTRHKGGG. Over residues 253–268 the composition is skewed to basic and acidic residues; sequence PEGRTRKPNKASDKLI. A compositionally biased stretch (basic residues) spans 269–278; that stretch reads VRRRRTGKKR.

Belongs to the universal ribosomal protein uL2 family. Part of the 50S ribosomal subunit. Forms a bridge to the 30S subunit in the 70S ribosome.

In terms of biological role, one of the primary rRNA binding proteins. Required for association of the 30S and 50S subunits to form the 70S ribosome, for tRNA binding and peptide bond formation. It has been suggested to have peptidyltransferase activity; this is somewhat controversial. Makes several contacts with the 16S rRNA in the 70S ribosome. This is Large ribosomal subunit protein uL2 from Mycobacteroides abscessus (strain ATCC 19977 / DSM 44196 / CCUG 20993 / CIP 104536 / JCM 13569 / NCTC 13031 / TMC 1543 / L948) (Mycobacterium abscessus).